The sequence spans 189 residues: GTP cyclohydrolase 1 (189 aa).

3 residues coordinate Zn(2+): cysteine 79, histidine 82, and cysteine 150.

This sequence belongs to the GTP cyclohydrolase I family. Homomer.

It catalyses the reaction GTP + H2O = 7,8-dihydroneopterin 3'-triphosphate + formate + H(+). The protein operates within cofactor biosynthesis; 7,8-dihydroneopterin triphosphate biosynthesis; 7,8-dihydroneopterin triphosphate from GTP: step 1/1. The polypeptide is GTP cyclohydrolase 1 (Rickettsia peacockii (strain Rustic)).